The primary structure comprises 156 residues: SsrA-binding protein (156 aa).

Residues 131 to 156 are disordered; sequence YDKRQTLREQQDKREALRVMRERNRG.

This sequence belongs to the SmpB family.

It localises to the cytoplasm. Required for rescue of stalled ribosomes mediated by trans-translation. Binds to transfer-messenger RNA (tmRNA), required for stable association of tmRNA with ribosomes. tmRNA and SmpB together mimic tRNA shape, replacing the anticodon stem-loop with SmpB. tmRNA is encoded by the ssrA gene; the 2 termini fold to resemble tRNA(Ala) and it encodes a 'tag peptide', a short internal open reading frame. During trans-translation Ala-aminoacylated tmRNA acts like a tRNA, entering the A-site of stalled ribosomes, displacing the stalled mRNA. The ribosome then switches to translate the ORF on the tmRNA; the nascent peptide is terminated with the 'tag peptide' encoded by the tmRNA and targeted for degradation. The ribosome is freed to recommence translation, which seems to be the essential function of trans-translation. This is SsrA-binding protein from Arthrobacter sp. (strain FB24).